We begin with the raw amino-acid sequence, 515 residues long: Maturase K (515 aa).

It belongs to the intron maturase 2 family. MatK subfamily.

It localises to the plastid. Its subcellular location is the chloroplast. In terms of biological role, usually encoded in the trnK tRNA gene intron. Probably assists in splicing its own and other chloroplast group II introns. The sequence is that of Maturase K from Pinus tabuliformis (Chinese red pine).